A 194-amino-acid chain; its full sequence is Putative 3-methyladenine DNA glycosylase (194 aa).

This sequence belongs to the DNA glycosylase MPG family.

In Mycolicibacterium fortuitum (Mycobacterium fortuitum), this protein is Putative 3-methyladenine DNA glycosylase.